Here is a 368-residue protein sequence, read N- to C-terminus: tRNA-specific 2-thiouridylase MnmA (368 aa).

ATP-binding positions include 23 to 30 (ALSGGVDS) and Leu-49. Cys-110 functions as the Nucleophile in the catalytic mechanism. A disulfide bridge connects residues Cys-110 and Cys-209. Gly-135 serves as a coordination point for ATP. Positions 159–161 (KDQ) are interaction with tRNA. Cys-209 serves as the catalytic Cysteine persulfide intermediate. The interaction with tRNA stretch occupies residues 314–315 (RY).

The protein belongs to the MnmA/TRMU family.

The protein localises to the cytoplasm. It catalyses the reaction S-sulfanyl-L-cysteinyl-[protein] + uridine(34) in tRNA + AH2 + ATP = 2-thiouridine(34) in tRNA + L-cysteinyl-[protein] + A + AMP + diphosphate + H(+). Functionally, catalyzes the 2-thiolation of uridine at the wobble position (U34) of tRNA, leading to the formation of s(2)U34. The polypeptide is tRNA-specific 2-thiouridylase MnmA (Synechococcus sp. (strain JA-2-3B'a(2-13)) (Cyanobacteria bacterium Yellowstone B-Prime)).